A 362-amino-acid chain; its full sequence is MGACGSVMQDEALKEQARIHRQIEKSLEKKKSALLEQSVLLIGPGESGKSTVLKQIRSVTVCRAMCGGYTKHELEEKKLLILRNLWTFSDMLLEYVIKNYLDMNETDKKKYKVMIEELKFCVMSGGHMGDELAETVKVFWLCAPIQEAYEKRNTYHLTESAGYFFENIDRIKMPDFQPTNQDIVRIRVPTTGVVTADVILKNIKLSVIDCGGQRQERRKWYHYFDDVHAVLFVAAISEYDQKLVEDESVNRMDEALNLYHIVFNGKYFTKAACILFLNKIDLFREKVKSVSIKKFHPGFEGANTAEDGAKYFRRKFRDGMHPDFKKRLYCHETCAISDQVQIIINTVIDTVVQENLKDTGMI.

Glycine 2 is lipidated: N-myristoyl glycine. Residue cysteine 4 is the site of S-palmitoyl cysteine attachment. The G-alpha domain maps to 35–362 (LEQSVLLIGP…QENLKDTGMI (328 aa)). The tract at residues 38–51 (SVLLIGPGESGKST) is G1 motif. Residues 43 to 50 (GPGESGKS), 184 to 190 (VRIRVPT), 209 to 213 (DCGGQ), 278 to 281 (NKID), and alanine 335 contribute to the GTP site. Residues serine 50 and threonine 190 each contribute to the Mg(2+) site. The interval 182–190 (DIVRIRVPT) is G2 motif. Residues 205–214 (LSVIDCGGQR) are G3 motif. The G4 motif stretch occupies residues 274–281 (ILFLNKID). The G5 motif stretch occupies residues 333 to 337 (TCAIS).

Belongs to the G-alpha family. As to quaternary structure, g proteins are composed of 3 units; alpha, beta and gamma. The alpha chain contains the guanine nucleotide binding site.

In terms of biological role, guanine nucleotide-binding proteins (G proteins) are involved as modulators or transducers in various transmembrane signaling systems. This Caenorhabditis briggsae protein is Guanine nucleotide-binding protein alpha-10 subunit (gpa-10).